A 198-amino-acid polypeptide reads, in one-letter code: GTP-binding protein RHO1 (198 aa).

Gly-16–Thr-23 contributes to the GTP binding site. The short motif at Tyr-38–Tyr-46 is the Effector region element. Residues Asp-63–Gln-67 and Cys-121–Asp-124 contribute to the GTP site. Cys-195 carries the cysteine methyl ester modification. Cys-195 carries S-geranylgeranyl cysteine lipidation. Positions Val-196 to Leu-198 are cleaved as a propeptide — removed in mature form.

Belongs to the small GTPase superfamily. Rho family.

Its subcellular location is the cell membrane. In Candida albicans (strain SC5314 / ATCC MYA-2876) (Yeast), this protein is GTP-binding protein RHO1 (RHO1).